A 659-amino-acid chain; its full sequence is PAN2-PAN3 deadenylation complex subunit PAN3 (659 aa).

Disordered regions lie at residues 1–26 (MASA…AREN) and 103–132 (PKAA…QENI). The C3H1-type zinc-finger motif lies at 26 to 55 (NAKDTLCRNVTIYGRCRYEDKGCAFNHDPL). The segment covering 115-132 (SVASRSNTSTPNSRQENI) has biased composition (polar residues). Positions 262-522 (QTLPNTQLPA…NIDIFITGIS (261 aa)) are pseudokinase domain. ATP contacts are provided by residues Arg314, 363-370 (DYYPLSKT), and 422-423 (SK). The stretch at 523 to 561 (SQLMSTFDSALHLDDQLTSDLSRELENGRLVRLMTKLNL) forms a coiled coil. The tract at residues 562–659 (VNERPEYEHD…ALLKPARRMH (98 aa)) is knob domain.

This sequence belongs to the protein kinase superfamily. PAN3 family. In terms of assembly, homodimer. Forms a heterotrimer with a catalytic subunit pan2 to form the poly(A)-nuclease (PAN) deadenylation complex. Interacts (via PAM-2 motif) with poly(A)-binding protein pab1 (via PABC domain), conferring substrate specificity of the enzyme complex.

The protein resides in the cytoplasm. Functionally, regulatory subunit of the poly(A)-nuclease (PAN) deadenylation complex, one of two cytoplasmic mRNA deadenylases involved in mRNA turnover. PAN specifically shortens poly(A) tails of RNA and the activity is stimulated by poly(A)-binding protein pab1. PAN deadenylation is followed by rapid degradation of the shortened mRNA tails by the CCR4-NOT complex. Deadenylated mRNAs are then degraded by two alternative mechanisms, namely exosome-mediated 3'-5' exonucleolytic degradation, or deadenylation-dependent mRNA decaping and subsequent 5'-3' exonucleolytic degradation by xrn1. May also be involved in post-transcriptional maturation of mRNA poly(A) tails. pan3 acts as a positive regulator for PAN activity, recruiting the catalytic subunit pan2 to mRNA via its interaction with RNA and with pab1. This Aspergillus clavatus (strain ATCC 1007 / CBS 513.65 / DSM 816 / NCTC 3887 / NRRL 1 / QM 1276 / 107) protein is PAN2-PAN3 deadenylation complex subunit PAN3.